Here is a 249-residue protein sequence, read N- to C-terminus: Diaminopimelate epimerase (249 aa).

2 residues coordinate substrate: Asn11 and Asn60. The Proton donor role is filled by Cys69. Residues 70–71 (GN), Asn164, and 182–183 (ER) contribute to the substrate site. Cys192 serves as the catalytic Proton acceptor. 193–194 (GT) provides a ligand contact to substrate.

Belongs to the diaminopimelate epimerase family. As to quaternary structure, homodimer.

The protein resides in the cytoplasm. The enzyme catalyses (2S,6S)-2,6-diaminopimelate = meso-2,6-diaminopimelate. The protein operates within amino-acid biosynthesis; L-lysine biosynthesis via DAP pathway; DL-2,6-diaminopimelate from LL-2,6-diaminopimelate: step 1/1. Its function is as follows. Catalyzes the stereoinversion of LL-2,6-diaminopimelate (L,L-DAP) to meso-diaminopimelate (meso-DAP), a precursor of L-lysine and an essential component of the bacterial peptidoglycan. This Campylobacter jejuni (strain RM1221) protein is Diaminopimelate epimerase.